A 540-amino-acid polypeptide reads, in one-letter code: Type II methyltransferase M.AccI (540 aa).

It belongs to the N(4)/N(6)-methyltransferase family. As to quaternary structure, monomer.

The enzyme catalyses a 2'-deoxyadenosine in DNA + S-adenosyl-L-methionine = an N(6)-methyl-2'-deoxyadenosine in DNA + S-adenosyl-L-homocysteine + H(+). Functionally, a gamma subtype methylase, recognizes the double-stranded sequence 5'-GTMKAC-3', methylates A-5 on both strands, and protects the DNA from cleavage by the AccI endonuclease. This Acinetobacter calcoaceticus protein is Type II methyltransferase M.AccI (accIM).